A 412-amino-acid chain; its full sequence is Clamp protein VP6 (412 aa).

The protein belongs to the reoviridae clamp protein family. As to quaternary structure, interacts with capsid proteins VP3, VP5 and VP7.

The protein localises to the virion. In terms of biological role, located at the interface of the incomplete T=13 outer capsid and the pseudo T=2 inner capsid, 120 VP6 subunits clamp and stabilizes the inner capsid shell. The chain is Clamp protein VP6 (S8) from Aquareovirus C (isolate Golden shiner/USA/GSRV/1977) (AQRV-C).